Reading from the N-terminus, the 498-residue chain is MTEKIRVRYAPSPTGHLHIGNARTAIFNWLFARHYNGQFIIRIEDTDLARNVKDGEKSQLDNLQWLGIDWDEGPDKANSKYAPYRQTERAAQGVYQKYIDELLASGKAYKSYKTEATLKEEREAQAQAHQAPHYVYEYAGMTKEQIKDAQAKDEAAGLKSVVRFRVPENHDYQWQDLVKGEVKINSKEIGGDWVIQKADGMPTYNFAVVIDDHLMEITHVLRGDDHVSNTPKQLMVYEAFGWKAPAFGHMALIIKAETGKKLSKRDEDTLQFIEQYRELGYLPEAMFNFIGLLGWSPVGENEIFTREQFKEMFDENRFTKANAKFDAKKLAWVNNQWMRSEKEKVMPQLIHELVKAGLINDQQAKNDADHLAKIIEIAGVDGIKATSEIAPLAEYPFFKLHDISKEDRQSWLETDDGQKVAAAFTEKIKALAEDEFKAGHILQIIRDLQHDLQIKGRPLWNPIRLITTHEVQGPNLPEILAVMGKDWTIKNIQLTVAV.

The 'HIGH' region signature appears at 11–21 (PSPTGHLHIGN). The 'KMSKS' region motif lies at 261 to 265 (KLSKR). Lys264 lines the ATP pocket.

It belongs to the class-I aminoacyl-tRNA synthetase family. Glutamate--tRNA ligase type 1 subfamily. In terms of assembly, monomer.

The protein localises to the cytoplasm. It carries out the reaction tRNA(Glu) + L-glutamate + ATP = L-glutamyl-tRNA(Glu) + AMP + diphosphate. Catalyzes the attachment of glutamate to tRNA(Glu) in a two-step reaction: glutamate is first activated by ATP to form Glu-AMP and then transferred to the acceptor end of tRNA(Glu). This Oenococcus oeni (strain ATCC BAA-331 / PSU-1) protein is Glutamate--tRNA ligase.